The sequence spans 1998 residues: MVKLANPLYTQWILEAIKKVKKQKQRPSEERICNAVSSSHGLDRKTVLEQLELSVKDGTILKVSNKGLNSYKDPDNPGRIALPKPRNHGKLDNKQSVDWNKLLKRAFEGLAESGGSTLKSIERFLKSQKDVSAACGGTAASGFHQQLRLAIKRAVGHGRLLKDGPLYRLNTKAANAEGKEGCESLSCLPPVSLLPHEKDKPVAEPIPICSFCLGTKEQNREKKPEDLISCADCGNSGHPSCLKFSPELTVRVRALRWQCIECKTCSSCRDQGKNADNMLFCDSCDRGFHMECCDPPLTRMPKGMWICQICRPRKKGRKLLQKKAAQIKRRYANPIGRPKNRLKKQSTVSKGPFSKVRTGPGRGRKRKITVSSQSASSSEEGYLERIDGLDFCRDSSAPLKFNKKTKGLIDGLTKFFTPSPDGRKARGEAVDYSELRIRKKGNRKSSTSHWPTDNQDGWESKQESEERLFGSQEIMTERDMELFRDIQEQALQKVGVTGPPDPQVRCPSVIEFGKYEIHTWYSSPYPQEYSRLPKLYLCEFCLKYMKSRTILQQHMKKCGWFHPPANEIYRKNNISVFEVDGNVSTIYCQNLCLLAKLFLDHKTLYYDVEPFLFYVLTQNDVKGCHLVGYFSKEKHCQQKYNVSCIMILPQYQRKGYGRFLIDFSYLLSKREGQAGSPEKPLSDLGRLSYMAYWKSVILECLYHQNDKQISIKKLSKLTGVCPQDITSTLHHLRMLDFRSDQFVIIRREKLIQDHMAKLQLNLRPVDVDPECLRWTPVIVSNSVVSEEEDEEADDGEKEEPQGQERELETRERVGKSVSRENKDQDSSSLIESEKKPEVKELASSSRLSKQALVRDSLPANSQPPRRGRCGRKNRKTQERFGDKDSKMLVGETLSTSQEQYGECEEKSAASRERYTEVGEQPAAPQAQADGNPDIPKGRFSESADLWRGQLKKSPETLKCRLPEGNDRLPCCYTDGDRAVFRGFSESSEEEEEPESPRSNSPPVLTKPTLKRKKPILHRRRRVRKRKHHNSSVVTETISETTEVLDEPFEDSDSERPMPRLEPTFEIEEEEEEEDENELFPRGYFHCLSSQDILRCQASSKRTASKDEEEEEEESDDADDTPVLKPVSLLRKCDVNSASLEPDTSTPMKKKKGWPKGKSRKPIHWKKRPGRKPGFKLNQDIIAVSTQECIVEPIVPIKPGRKPRTQESEELVEVKEGLVEERKEEMHTEADEEAEEEEDAASSDIRAMSPLDSSNSPDADPKEPEAEEEEEKPLDDPRQSEEEPQELEEQEQEEEDEVTAEANQNEDHDADDEDDGHLDSLKTKEPEGQPAREDGTEEPGTQESFLDASIQDSRENAKDKDETEADSEEEQPSHEASVGSETMPGSEEDHEEDSNTKEELIELKEEEEIPHSELDLETVQAVQSLTQEESSEHEGAYQDCEETLAACQTLQSYTHTDEDPQMSMVEDCHASEHNSPISSIPSHPSQSVRSVSSPSMPALESGYTQISPEQGSLSAPSMQNMETSPMMDVPSVSDHSQQVVDSGFSDLGSIESTTENYENPSSYDSTMGSSICGNNSSQSSCSYGGLSSSSSLTQNSCVVTQQMASMGNSCSMLQQNSVQPATNCNIKSPQTCVVERPPSNQQPPPPPPPPPPPQQPQPQPQQQAAPQPPPPQPQQQPPPPPQQQPQPPPPPQQQPPLSQCSMNNSFTAAPMIMEIPESGGTGNISIYERIPGDFGAGSYSQPSATFSLAKLQQLTNTIMDPHAMPYSHSPAVTSYATSVSLSNTGLAQLAPSHPLAGTPQAQATMTPPPNLAPTTMNLTSPLLQCNMSATNIGIPHTQRLQGQMPVKGHISIRSKSAPLPSATAHQQQLYGRSPPAVAMQAGPRALAVQRGMNMGVNLMPTPAYNVNSMNMNTLNAMNSYRMTQPMMNSSYHSNPAYMNQTAQYPMQMQMGMMGSQAYTQQPMQPNPHGNMMYTGPSHHSYMNAAGVPKQSLNGPYMRR.

One can recognise an SAMD1-like winged helix (WH) domain in the interval 1-77; that stretch reads MVKLANPLYT…LNSYKDPDNP (77 aa). The segment at 1-144 is required for activation of RUNX1-1; that stretch reads MVKLANPLYT…CGGTAASGFH (144 aa). The interval 52-166 is required for nuclear localization; the sequence is ELSVKDGTIL…HGRLLKDGPL (115 aa). The segment at 72–93 is disordered; the sequence is KDPDNPGRIALPKPRNHGKLDN. The 77-residue stretch at 95–171 folds into the H15 domain; sequence QSVDWNKLLK…KDGPLYRLNT (77 aa). The segment at 144–662 is interaction with PML; the sequence is HQQLRLAIKR…RKGYGRFLID (519 aa). Position 172 is an N6-acetyllysine (Lys172). 2 PHD-type zinc fingers span residues 199-258 and 255-306; these read DKPV…LRWQ and LRWQ…GMWI. The interaction with RUNX1-1 stretch occupies residues 312 to 662; it reads PRKKGRKLLQ…RKGYGRFLID (351 aa). The disordered stretch occupies residues 336–377; sequence GRPKNRLKKQSTVSKGPFSKVRTGPGRGRKRKITVSSQSASS. Residues Lys350 and Lys355 each carry the N6-acetyllysine modification. The residue at position 369 (Thr369) is a Phosphothreonine; by PKB/AKT1. Phosphoserine is present on Ser419. The segment at 440-464 is disordered; the sequence is KGNRKSSTSHWPTDNQDGWESKQES. The segment covering 444–457 has biased composition (polar residues); the sequence is KSSTSHWPTDNQDG. Residue Ser471 is modified to Phosphoserine. The segment at 486–776 is catalytic; sequence IQEQALQKVG…VDPECLRWTP (291 aa). The MYST-type HAT domain occupies 502–776; that stretch reads PQVRCPSVIE…VDPECLRWTP (275 aa). A mediates interaction with BRPF1, required for histone H3 acetyltransferase activity region spans residues 505 to 808; sequence RCPSVIEFGK…EPQGQERELE (304 aa). The C2HC MYST-type zinc finger occupies 535-560; sequence LYLCEFCLKYMKSRTILQQHMKKCGW. Residue Lys602 is modified to N6-acetyllysine; by autocatalysis. Residues 643–647 and 652–658 contribute to the acetyl-CoA site; these read SCIMI and QRKGYGR. The active-site Proton donor/acceptor is Glu678. Ser682 is a binding site for acetyl-CoA. A disordered region spans residues 783 to 947; the sequence is VVSEEEDEEA…RFSESADLWR (165 aa). Position 785 is a phosphoserine (Ser785). Over residues 785–797 the composition is skewed to acidic residues; sequence SEEEDEEADDGEK. Basic and acidic residues predominate over residues 798-840; that stretch reads EEPQGQERELETRERVGKSVSRENKDQDSSSLIESEKKPEVKE. The residue at position 815 (Lys815) is an N6-acetyllysine. Lys835 participates in a covalent cross-link: Glycyl lysine isopeptide (Lys-Gly) (interchain with G-Cter in SUMO2). A compositionally biased stretch (basic residues) spans 865–874; it reads RRGRCGRKNR. Positions 875-886 are enriched in basic and acidic residues; the sequence is KTQERFGDKDSK. Residue Tyr900 is modified to Phosphotyrosine. Positions 903 to 916 are enriched in basic and acidic residues; that stretch reads CEEKSAASRERYTE. Ser940 and Ser953 each carry phosphoserine. A disordered region spans residues 982 to 1079; it reads GFSESSEEEE…EEEEDENELF (98 aa). N6-acetyllysine is present on Lys1006. Positions 1008–1029 are enriched in basic residues; it reads TLKRKKPILHRRRRVRKRKHHN. Residues 1030–1041 are compositionally biased toward low complexity; it reads SSVVTETISETT. 2 stretches are compositionally biased toward acidic residues: residues 1042-1052 and 1064-1077; these read EVLDEPFEDSD and FEIE…DENE. Phosphoserine occurs at positions 1088, 1089, and 1114. Disordered regions lie at residues 1096–1175, 1195–1436, 1450–1567, and 1630–1702; these read QASS…PGFK, PIKP…EGAY, QSYT…STMG, and TCVV…CSMN. The span at 1106-1119 shows a compositional bias: acidic residues; the sequence is DEEEEEEESDDADD. Polar residues predominate over residues 1135–1146; that stretch reads NSASLEPDTSTP. Positions 1147–1173 are enriched in basic residues; that stretch reads MKKKKGWPKGKSRKPIHWKKRPGRKPG. The span at 1203-1228 shows a compositional bias: basic and acidic residues; that stretch reads RTQESEELVEVKEGLVEERKEEMHTE. Composition is skewed to acidic residues over residues 1229-1240 and 1281-1298; these read ADEEAEEEEDAA and EEPQ…DEVT. Composition is skewed to basic and acidic residues over residues 1316–1333, 1351–1360, and 1392–1413; these read HLDS…ARED, DSRENAKDKD, and DSNT…HSEL. Over residues 1472–1496 the composition is skewed to low complexity; the sequence is HNSPISSIPSHPSQSVRSVSSPSMP. The segment covering 1501-1522 has biased composition (polar residues); that stretch reads GYTQISPEQGSLSAPSMQNMET. The interval 1510-1635 is interaction with RUNX1-2; that stretch reads GSLSAPSMQN…KSPQTCVVER (126 aa). The interaction with PML stretch occupies residues 1510–1735; sequence GSLSAPSMQN…YERIPGDFGA (226 aa). Over residues 1527–1541 the composition is skewed to low complexity; it reads DVPSVSDHSQQVVDS. The span at 1549–1567 shows a compositional bias: polar residues; that stretch reads IESTTENYENPSSYDSTMG. Pro residues-rich tracts occupy residues 1639–1658 and 1665–1693; these read NQQP…PQPQ and PQPP…PQQQ. Positions 1907–1942 are required for activation of RUNX1-2; the sequence is SMNMNTLNAMNSYRMTQPMMNSSYHSNPAYMNQTAQ.

The protein belongs to the MYST (SAS/MOZ) family. In terms of assembly, component of the MOZ/MORF complex composed at least of ING5, KAT6A, KAT6B, MEAF6 and one of BRPF1, BRD1/BRPF2 and BRPF3. Interacts with RUNX1; phosphorylation of RUNX1 enhances the interaction. Interacts with RUNX2. Interacts with p53/TP53. Interacts with PML and this interaction positively regulates its acetylation activity towards p53/TP53. In terms of processing, autoacetylated. Autoacetylation at Lys-602 is required for proper function. Post-translationally, phosphorylation at Thr-369 by PKB/AKT1 inhibits its interaction with PML and negatively regulates its acetylation activity towards p53/TP53.

Its subcellular location is the nucleus. The protein localises to the nucleolus. It localises to the nucleoplasm. It is found in the PML body. The enzyme catalyses L-lysyl-[protein] + acetyl-CoA = N(6)-acetyl-L-lysyl-[protein] + CoA + H(+). Its function is as follows. Histone acetyltransferase that acetylates lysine residues in histone H3 and histone H4 (in vitro). Component of the MOZ/MORF complex which has a histone H3 acetyltransferase activity. May act as a transcriptional coactivator for RUNX1 and RUNX2. Acetylates p53/TP53 at 'Lys-120' and 'Lys-382' and controls its transcriptional activity via association with PML. In Rattus norvegicus (Rat), this protein is Histone acetyltransferase KAT6A (Kat6a).